Here is a 312-residue protein sequence, read N- to C-terminus: Olfactory receptor 7D2 (312 aa).

Over 1–25 (MEAGNQTGFLEFILLGLSEDPELQP) the chain is Extracellular. The N-linked (GlcNAc...) asparagine glycan is linked to asparagine 5. The chain crosses the membrane as a helical span at residues 26–46 (FIFGLFLSMYLVTVLGNLLII). Over 47 to 54 (LAISSDSH) the chain is Cytoplasmic. Residues 55-75 (LHTPMYFFLSNLSWVDICFST) traverse the membrane as a helical segment. Topologically, residues 76–99 (CIVPKMLVNIQTENKAISYMDCLT) are extracellular. Cysteine 97 and cysteine 189 are joined by a disulfide. Residues 100–120 (QVYFSMFFPILDTLLLTVMAY) traverse the membrane as a helical segment. The Cytoplasmic segment spans residues 121–139 (DRFVAVCHPLHYMIIMNPH). The chain crosses the membrane as a helical span at residues 140–160 (LCGLLVFVTWLIGVMTSLLHI). Residues 161 to 197 (SLMMHLIFCKDFEIPHFFCELTYILQLACSDTFLNST) are Extracellular-facing. A helical membrane pass occupies residues 198–217 (LIYFMTGVLGVFPLLGIIFS). The Cytoplasmic segment spans residues 218-237 (YSRIASSIRKMSSSGGKQKA). Residues 238-258 (LSTCGSHLSVVSLFYGTGIGV) traverse the membrane as a helical segment. Residues 259–271 (HFTSAVTHSSQKI) are Extracellular-facing. The chain crosses the membrane as a helical span at residues 272-292 (SVASVMYTVVTPMLNPFIYSL). The Cytoplasmic segment spans residues 293–312 (RNKDVKGALGSLLSRAASCL).

This sequence belongs to the G-protein coupled receptor 1 family.

The protein resides in the cell membrane. Functionally, odorant receptor. The chain is Olfactory receptor 7D2 (OR7D2) from Homo sapiens (Human).